We begin with the raw amino-acid sequence, 463 residues long: uncharacterized protein (463 aa).

This is an uncharacterized protein from Saccharomyces cerevisiae (strain ATCC 204508 / S288c) (Baker's yeast).